The chain runs to 173 residues: Nucleoside-triphosphatase THEP1 (173 aa).

ATP-binding positions include 15 to 22 (GMPGVGKT) and 101 to 108 (LKIIDEIG).

This sequence belongs to the THEP1 NTPase family.

The catalysed reaction is a ribonucleoside 5'-triphosphate + H2O = a ribonucleoside 5'-diphosphate + phosphate + H(+). Its function is as follows. Has nucleotide phosphatase activity towards ATP, GTP, CTP, TTP and UTP. May hydrolyze nucleoside diphosphates with lower efficiency. The sequence is that of Nucleoside-triphosphatase THEP1 from Pyrobaculum aerophilum (strain ATCC 51768 / DSM 7523 / JCM 9630 / CIP 104966 / NBRC 100827 / IM2).